We begin with the raw amino-acid sequence, 193 residues long: Ion-translocating oxidoreductase complex subunit A (193 aa).

6 consecutive transmembrane segments (helical) span residues 5–25 (LLLF…FLGL), 47–67 (FVMT…LIPL), 72–92 (LRTL…EMVV), 102–122 (LLGI…VALL), 134–154 (ALYG…FAAI), and 171–191 (AIAL…SGLV).

Belongs to the NqrDE/RnfAE family. In terms of assembly, the complex is composed of six subunits: RsxA, RsxB, RsxC, RsxD, RsxE and RsxG.

The protein resides in the cell inner membrane. Part of a membrane-bound complex that couples electron transfer with translocation of ions across the membrane. Required to maintain the reduced state of SoxR. The chain is Ion-translocating oxidoreductase complex subunit A from Salmonella arizonae (strain ATCC BAA-731 / CDC346-86 / RSK2980).